The following is a 500-amino-acid chain: Glycerol kinase (500 aa).

Residue Thr16 participates in ADP binding. Positions 16 and 17 each coordinate ATP. Sn-glycerol 3-phosphate is bound at residue Thr16. ADP is bound at residue Arg20. The sn-glycerol 3-phosphate site is built by Arg86, Glu87, Tyr138, and Asp243. Glycerol is bound by residues Arg86, Glu87, Tyr138, Asp243, and Gln244. 2 residues coordinate ADP: Thr265 and Gly313. Positions 265, 313, 317, and 414 each coordinate ATP. ADP is bound by residues Gly414 and Asn418.

This sequence belongs to the FGGY kinase family.

The catalysed reaction is glycerol + ATP = sn-glycerol 3-phosphate + ADP + H(+). The protein operates within polyol metabolism; glycerol degradation via glycerol kinase pathway; sn-glycerol 3-phosphate from glycerol: step 1/1. Its activity is regulated as follows. Inhibited by fructose 1,6-bisphosphate (FBP). In terms of biological role, key enzyme in the regulation of glycerol uptake and metabolism. Catalyzes the phosphorylation of glycerol to yield sn-glycerol 3-phosphate. The chain is Glycerol kinase from Trichormus variabilis (strain ATCC 29413 / PCC 7937) (Anabaena variabilis).